The sequence spans 625 residues: PTS system beta-glucoside-specific EIIBCA component (625 aa).

The PTS EIIB type-1 domain maps to 1–84 (MTELARKIVA…NSVAGLDEKA (84 aa)). Residues 1–99 (MTELARKIVA…NDDKGNLLNR (99 aa)) lie on the Periplasmic side of the membrane. Catalysis depends on Cys24, which acts as the Phosphocysteine intermediate; for EIIB activity. Residues 100–120 (FVYVISGIFTPLIGLMAATGI) form a helical membrane-spanning segment. Residues 102–465 (YVISGIFTPL…RQPAQGAPQE (364 aa)) enclose the PTS EIIC type-1 domain. Topologically, residues 121–140 (LKGMLALALTFQWTTEQSGT) are cytoplasmic. A helical membrane pass occupies residues 141-161 (YLILFSASDALFWFFPIILGY). The Periplasmic segment spans residues 162–166 (TAGKR). Residues 167–187 (FGGNPFTAMVIGGALVHPLIL) form a helical membrane-spanning segment. At 188–202 (TAFENGQKADALGLD) the chain is on the cytoplasmic side. Residues 203–223 (FLGIPVTLLNYSSSVIPIIFS) form a helical membrane-spanning segment. Topologically, residues 224 to 244 (AWLCSILERRLNAWLPSAIKN) are periplasmic. A helical transmembrane segment spans residues 245 to 265 (FFTPLLCLMVITPVTFLLVGP). Residues 266–284 (LSTWISELIAAGYLWLYQA) lie on the Cytoplasmic side of the membrane. The chain crosses the membrane as a helical span at residues 285–305 (VPAFAGAVMGGFWQIFVMFGL). Residues 306–324 (HWGLVPLCINNFTVLGYDT) lie on the Periplasmic side of the membrane. Residues 325–345 (MIPLLMPAIMAQVGAALGVFL) form a helical membrane-spanning segment. Over 346-353 (CERDAQKK) the chain is Cytoplasmic. The helical transmembrane segment at 354 to 374 (VVAGSAALTSLFGITEPAVYG) threads the bilayer. Residues 375-380 (VNLPRK) are Periplasmic-facing. The chain crosses the membrane as a helical span at residues 381–401 (YPFVIACISGALGATIIGYAQ). Over 402–403 (TK) the chain is Cytoplasmic. Residues 404–424 (VYSFGLPSIFTFMQTIPSTGI) traverse the membrane as a helical segment. The Periplasmic portion of the chain corresponds to 425–431 (DFTVWAS). The chain crosses the membrane as a helical span at residues 432–452 (VIGGVIAIGCAFVGTVMLHFI). At 453-625 (TAKRQPAQGA…AGEPLLSIIR (173 aa)) the chain is on the cytoplasmic side. Residues 495–599 (DTTFASGLLG…DLTTPVLISN (105 aa)) enclose the PTS EIIA type-1 domain. The active-site Tele-phosphohistidine intermediate; for EIIA activity is His547.

It is found in the cell inner membrane. The phosphoenolpyruvate-dependent sugar phosphotransferase system (sugar PTS), a major carbohydrate active -transport system, catalyzes the phosphorylation of incoming sugar substrates concomitantly with their translocation across the cell membrane. This system is involved in beta-glucoside transport. Functionally, acts both as a kinase and as a phosphatase on BglG. The chain is PTS system beta-glucoside-specific EIIBCA component (bglF) from Escherichia coli (strain K12).